A 313-amino-acid chain; its full sequence is Porphobilinogen deaminase (313 aa).

Cysteine 242 carries the post-translational modification S-(dipyrrolylmethanemethyl)cysteine.

Belongs to the HMBS family. As to quaternary structure, monomer. Dipyrromethane is required as a cofactor.

The enzyme catalyses 4 porphobilinogen + H2O = hydroxymethylbilane + 4 NH4(+). It participates in porphyrin-containing compound metabolism; protoporphyrin-IX biosynthesis; coproporphyrinogen-III from 5-aminolevulinate: step 2/4. Functionally, tetrapolymerization of the monopyrrole PBG into the hydroxymethylbilane pre-uroporphyrinogen in several discrete steps. This Escherichia coli O17:K52:H18 (strain UMN026 / ExPEC) protein is Porphobilinogen deaminase.